The following is a 448-amino-acid chain: Asparagine--tRNA ligase (448 aa).

It belongs to the class-II aminoacyl-tRNA synthetase family. Homodimer.

The protein localises to the cytoplasm. The catalysed reaction is tRNA(Asn) + L-asparagine + ATP = L-asparaginyl-tRNA(Asn) + AMP + diphosphate + H(+). This is Asparagine--tRNA ligase from Streptococcus sanguinis (strain SK36).